We begin with the raw amino-acid sequence, 473 residues long: MKTLYSLRRFYHVETLFNGTLALAGRDQETTGFAWWAGNARLINLSGKLLGAHVAHAGLIVFWAGAMNLFEVAHFVPEKPMYEQGLILLPHLATLGWGVGPGGEVIDTFPYFVSGVLHLISSAVLGFGGIYHALLGPETLEESFPFFGYVWKDRNKMTTILGIHLILLGLGAFLLVFKALYFGGVYDTWAPGGGDVRKITNLTLSPSIIFGYLLKSPFGGEGWIVSVDDLEDIIGGHVWLGSICILGGIWHILTKPFAWARRALVWSGEAYLSYSLGALSVFGFIACCFVWFNNTAYPSEFYGPTGPEASQAQAFTFLVRDQRLGANVGSAQGPTGLGKYLMRSPTGEVIFGGETMRFWDLRAPWLEPLRGPNGLDLSRLKKDIQPWQERRSAEYMTHAPLGSLNSVGGVATEINAVNYVSPRSWLATSHFVLGFFFFVGHLWHAGRARAAAAGFEKGIDRDFEPVLSMTPLN.

The propeptide occupies 1 to 14 (MKTLYSLRRFYHVE). Thr15 bears the N-acetylthreonine mark. Phosphothreonine is present on Thr15. The next 5 helical transmembrane spans lie at 69–93 (LFEVAHFVPEKPMYEQGLILLPHLA), 134–155 (LLGPETLEESFPFFGYVWKDRN), 178–200 (KALYFGGVYDTWAPGGGDVRKIT), 255–275 (KPFAWARRALVWSGEAYLSYS), and 291–312 (WFNNTAYPSEFYGPTGPEASQA). A [CaMn4O5] cluster-binding site is contributed by Glu367. Residues 447 to 471 (RARAAAAGFEKGIDRDFEPVLSMTP) form a helical membrane-spanning segment.

Belongs to the PsbB/PsbC family. PsbC subfamily. In terms of assembly, PSII is composed of 1 copy each of membrane proteins PsbA, PsbB, PsbC, PsbD, PsbE, PsbF, PsbH, PsbI, PsbJ, PsbK, PsbL, PsbM, PsbT, PsbX, PsbY, PsbZ, Psb30/Ycf12, at least 3 peripheral proteins of the oxygen-evolving complex and a large number of cofactors. It forms dimeric complexes. It depends on Binds multiple chlorophylls and provides some of the ligands for the Ca-4Mn-5O cluster of the oxygen-evolving complex. It may also provide a ligand for a Cl- that is required for oxygen evolution. PSII binds additional chlorophylls, carotenoids and specific lipids. as a cofactor.

It is found in the plastid. The protein localises to the chloroplast thylakoid membrane. In terms of biological role, one of the components of the core complex of photosystem II (PSII). It binds chlorophyll and helps catalyze the primary light-induced photochemical processes of PSII. PSII is a light-driven water:plastoquinone oxidoreductase, using light energy to abstract electrons from H(2)O, generating O(2) and a proton gradient subsequently used for ATP formation. The protein is Photosystem II CP43 reaction center protein of Nicotiana tabacum (Common tobacco).